The following is a 1414-amino-acid chain: DNA-directed RNA polymerase subunit beta' (1414 aa).

The Zn(2+) site is built by cysteine 70, cysteine 72, cysteine 85, and cysteine 88. Mg(2+) contacts are provided by aspartate 460, aspartate 462, and aspartate 464. Positions 815, 889, 896, and 899 each coordinate Zn(2+). The interval 1395–1414 (EAEAQFADISSTPDSDTDAS) is disordered.

Belongs to the RNA polymerase beta' chain family. In terms of assembly, the RNAP catalytic core consists of 2 alpha, 1 beta, 1 beta' and 1 omega subunit. When a sigma factor is associated with the core the holoenzyme is formed, which can initiate transcription. It depends on Mg(2+) as a cofactor. The cofactor is Zn(2+).

It catalyses the reaction RNA(n) + a ribonucleoside 5'-triphosphate = RNA(n+1) + diphosphate. Its function is as follows. DNA-dependent RNA polymerase catalyzes the transcription of DNA into RNA using the four ribonucleoside triphosphates as substrates. This Herminiimonas arsenicoxydans protein is DNA-directed RNA polymerase subunit beta'.